A 994-amino-acid chain; its full sequence is Seizure protein 6 homolog (994 aa).

The signal sequence occupies residues 1-19 (MRPVALLLLPSLLALLAHG). The Extracellular segment spans residues 20–925 (LSLEAPTVGK…AASSTLDAAH (906 aa)). The segment at 28–50 (GKGQAPGIEETDGELTAAPTPEQ) is disordered. O-glycosylated at two sites regions lie at residues 38–47 (TDGELTAAPT) and 59–63 (TTAPT). Disordered regions lie at residues 88 to 146 (LRPA…ESES), 171 to 191 (IASTTPPSRAWTPTQEGPGDM), and 241 to 261 (PGPCSWNFSGPEGSLDSPTDL). The segment covering 93 to 107 (PFQPDPPAPFTPSPL) has biased composition (pro residues). 2 stretches are compositionally biased toward polar residues: residues 112-123 (NQDSRPVFTSPT) and 172-185 (ASTTPPSRAWTPTQ). Asparagine 289 is a glycosylation site (N-linked (GlcNAc...) asparagine). In terms of domain architecture, Sushi 1 spans 355–414 (LSCHFPRRPAYGDVTVTSLHPGGSARFHCATGYQLKGARHLTCLNATQPFWDSKEPVCIA). 12 disulfide bridges follow: cysteine 357/cysteine 397, cysteine 383/cysteine 412, cysteine 416/cysteine 443, cysteine 532/cysteine 574, cysteine 559/cysteine 589, cysteine 593/cysteine 619, cysteine 710/cysteine 752, cysteine 738/cysteine 765, cysteine 771/cysteine 813, cysteine 799/cysteine 830, cysteine 838/cysteine 880, and cysteine 866/cysteine 895. N-linked (GlcNAc...) asparagine glycosylation is found at asparagine 399, asparagine 436, and asparagine 541. One can recognise a CUB 1 domain in the interval 416 to 527 (CGGVIRNATT…AGMALRYEAF (112 aa)). A Sushi 2 domain is found at 530 to 591 (GHCYEPFVKY…WNETEPACRA (62 aa)). Positions 593-704 (CSGEITDSAG…QGFVIHFFEV (112 aa)) constitute a CUB 2 domain. Sushi domains lie at 708–767 (DTCP…SCQR), 769–832 (TSCH…KCLL), and 836–897 (KPCH…ICRA). A helical membrane pass occupies residues 926 to 946 (IAAAIFLPLVAMVLLVGGVYF). Residues 947–994 (YFSRLQGKSSLQLPRPRPRPYNRITIESAFDNPTYETGSLSFAGDERI) lie on the Cytoplasmic side of the membrane.

This sequence belongs to the SEZ6 family. In terms of processing, glycosylated.

It localises to the cell membrane. Its function is as follows. May play a role in cell-cell recognition and in neuronal membrane signaling. Seems to be important for the achievement of the necessary balance between dendrite elongation and branching during the elaboration of a complex dendritic arbor. Involved in the development of appropriate excitatory synaptic connectivity. The protein is Seizure protein 6 homolog (SEZ6) of Homo sapiens (Human).